The primary structure comprises 279 residues: MRTTISQLKEMKQNKQKIAILTAYDYPTAQILDKAGIPAILVGDSLGMVVLGYDSTVSVTMEDMLHHLKAVVRGSQKALIIADMPFMTYHLSPEQALLNAGRFIQEGGAQAVKLEGGVNVADKVKRIVDCGIPVMGHIGLTPQSVNQLSGFKVQGKTLATALSLIEDAKALEKAGAFAIVLETMPAELAAIITAGISIPTIGIGAGEECDGQVQVISDMLGMFTDFIPKHTKRYADLNGIITKAVSEYAAEVTKGAFPTLKESFTLDKKVLEELKKCVL.

Positions 44 and 83 each coordinate Mg(2+). 3-methyl-2-oxobutanoate is bound by residues 44 to 45, Asp-83, and Lys-113; that span reads DS. Glu-115 serves as a coordination point for Mg(2+). Glu-182 serves as the catalytic Proton acceptor.

The protein belongs to the PanB family. Homodecamer; pentamer of dimers. Mg(2+) is required as a cofactor.

The protein localises to the cytoplasm. The catalysed reaction is 3-methyl-2-oxobutanoate + (6R)-5,10-methylene-5,6,7,8-tetrahydrofolate + H2O = 2-dehydropantoate + (6S)-5,6,7,8-tetrahydrofolate. Its pathway is cofactor biosynthesis; (R)-pantothenate biosynthesis; (R)-pantoate from 3-methyl-2-oxobutanoate: step 1/2. Catalyzes the reversible reaction in which hydroxymethyl group from 5,10-methylenetetrahydrofolate is transferred onto alpha-ketoisovalerate to form ketopantoate. The polypeptide is 3-methyl-2-oxobutanoate hydroxymethyltransferase (Dehalococcoides mccartyi (strain ATCC BAA-2100 / JCM 16839 / KCTC 5957 / BAV1)).